Consider the following 348-residue polypeptide: Competence protein ComGA (348 aa).

145 to 152 (GATGSGKT) serves as a coordination point for ATP.

The protein belongs to the GSP E family.

The protein resides in the cell membrane. In terms of biological role, required for uptake of DNA by competent cells. The polypeptide is Competence protein ComGA (comGA) (Halalkalibacterium halodurans (strain ATCC BAA-125 / DSM 18197 / FERM 7344 / JCM 9153 / C-125) (Bacillus halodurans)).